The following is a 333-amino-acid chain: MFRAAAPGQLRRAASLLRFQSTLVIAEHADDSLAPITLNTITAATRLGGEVSCLVAGTKCDKVAQDLCKVAGIAKVLVAQHDVYRGLLPEELTPLILATQKQFNYTHICAGASAFGKNLLPRVAAKLEVAPISDIIAIKSPDTFVRTIYAGNALCTVKCDEKVKVFSVRGTSFEAAATSGGSASSEKASSTSPVEISEWLDQKLTKSDRPELTGAKVVVSGGRGLKSGENFKLLYDLADQRHAAVGASRAAVDAGFVPNDMQVGQTGKIVAPELYIAVGISGAIQHLAGMKDSKTIVAINKDPEAPIFQVADYGIVADLFKVVPEMTEILKKK.

The transit peptide at 1–19 (MFRAAAPGQLRRAASLLRF) directs the protein to the mitochondrion. The tract at residues 20-204 (QSTLVIAEHA…EISEWLDQKL (185 aa)) is domain I. Lys59 is modified (N6-acetyllysine; alternate). At Lys59 the chain carries N6-succinyllysine; alternate. N6-acetyllysine is present on Lys62. Lys69 carries the N6-acetyllysine; alternate modification. Lys69 bears the N6-succinyllysine; alternate mark. N6-acetyllysine is present on Lys75. Thr93 carries the phosphothreonine modification. An N6-acetyllysine mark is found at Lys101 and Lys139. Residue Ser140 is modified to Phosphoserine. Lys158 carries the post-translational modification N6-acetyllysine; alternate. Lys158 is subject to N6-succinyllysine; alternate. At Lys164 the chain carries N6-acetyllysine. Lys187 carries the N6-succinyllysine modification. An N6-acetyllysine; alternate modification is found at Lys203. Lys203 bears the N6-succinyllysine; alternate mark. Positions 205–333 (TKSDRPELTG…PEMTEILKKK (129 aa)) are domain II. The residue at position 216 (Lys216) is an N6-succinyllysine. FAD is bound at residue Arg223. N6-acetyllysine; alternate is present on residues Lys226 and Lys232. An N6-succinyllysine; alternate mark is found at Lys226 and Lys232. FAD contacts are provided by residues Ser248, 263–266 (VGQT), 281–286 (SGAIQH), and Asn300. N6-succinyllysine is present on Lys301. 318 to 319 (DL) lines the FAD pocket.

This sequence belongs to the ETF alpha-subunit/FixB family. As to quaternary structure, heterodimer composed of ETFA and ETFB. Identified in a complex that contains ETFA, ETFB and ETFRF1. Interaction with ETFRF1 promotes dissociation of the bound FAD and loss of electron transfer activity. Interacts with TASOR. FAD serves as cofactor.

It is found in the mitochondrion matrix. Heterodimeric electron transfer flavoprotein that accepts electrons from several mitochondrial dehydrogenases, including acyl-CoA dehydrogenases, glutaryl-CoA and sarcosine dehydrogenase. It transfers the electrons to the main mitochondrial respiratory chain via ETF-ubiquinone oxidoreductase (ETF dehydrogenase). Required for normal mitochondrial fatty acid oxidation and normal amino acid metabolism. The protein is Electron transfer flavoprotein subunit alpha, mitochondrial (ETFA) of Pongo abelii (Sumatran orangutan).